Here is a 206-residue protein sequence, read N- to C-terminus: MKTILAVIFFGILAFAFADYPSIENCTHPPAMANFNQKKFLEGKWYVTKAKHGSNSTVCREYRAKTKGNDQILVGDGYYSFNGGTFYFTVRCKRLPNKEVQKPLQFTCTQKSTDDPSKMFKFQLEVTILDTDYANYAVMYRCVQFPEQLGSHFEDNTLLLHRNPDQLVDENQVERKLNLSFDSFRSREDVVDGCPKLPSKKKNKAS.

An N-terminal signal peptide occupies residues 1–18; the sequence is MKTILAVIFFGILAFAFA. 3 N-linked (GlcNAc...) asparagine glycosylation sites follow: Asn25, Asn55, and Asn178.

It belongs to the calycin superfamily. Triabin family. Interacts with host coagulation factor XII (F12) (inactive and activated) (via amino acids 1-77). Interacts with host high molecular weight kininogen (KNG1) (via amino acids 402-532). Salivary gland (at protein level).

Its subcellular location is the secreted. Zn(2+) modulates binding to host coagulation factor XII (F12) and high molecular weight kininogen (KNG1). In terms of biological role, suppresses activation of the host plasma kallikrein-kinin system, leading to inhibition of the intrinsic coagulation pathway. Blocks host coagulation factor XII (F12) and prekallikrein (KLKB1) reciprocal activation without affecting their amidolytic activities. Blocks binding of host F12 and high molecular weight kininogen (KNG1) to negatively charged surfaces. Attenuates generation of bradykinin by interfering with activation of host kallikrein-kinin system. This chain is Triafestin-2, found in Triatoma infestans (Assassin bug).